The primary structure comprises 360 residues: N5-carboxyaminoimidazole ribonucleotide synthase (360 aa).

Residues arginine 98, lysine 138, 143–149 (GYDGKGQ), 173–176 (EGFV), glutamate 181, histidine 204, and 255–256 (NE) contribute to the ATP site. In terms of domain architecture, ATP-grasp spans 102 to 285 (KSMFKDLGIP…QFENHLRAVA (184 aa)).

This sequence belongs to the PurK/PurT family. As to quaternary structure, homodimer.

It catalyses the reaction 5-amino-1-(5-phospho-beta-D-ribosyl)imidazole + hydrogencarbonate + ATP = 5-carboxyamino-1-(5-phospho-D-ribosyl)imidazole + ADP + phosphate + 2 H(+). The protein operates within purine metabolism; IMP biosynthesis via de novo pathway; 5-amino-1-(5-phospho-D-ribosyl)imidazole-4-carboxylate from 5-amino-1-(5-phospho-D-ribosyl)imidazole (N5-CAIR route): step 1/2. Catalyzes the ATP-dependent conversion of 5-aminoimidazole ribonucleotide (AIR) and HCO(3)(-) to N5-carboxyaminoimidazole ribonucleotide (N5-CAIR). This chain is N5-carboxyaminoimidazole ribonucleotide synthase, found in Pseudomonas aeruginosa (strain ATCC 15692 / DSM 22644 / CIP 104116 / JCM 14847 / LMG 12228 / 1C / PRS 101 / PAO1).